A 219-amino-acid polypeptide reads, in one-letter code: N-(5'-phosphoribosyl)anthranilate isomerase (219 aa).

The protein belongs to the TrpF family.

The catalysed reaction is N-(5-phospho-beta-D-ribosyl)anthranilate = 1-(2-carboxyphenylamino)-1-deoxy-D-ribulose 5-phosphate. The protein operates within amino-acid biosynthesis; L-tryptophan biosynthesis; L-tryptophan from chorismate: step 3/5. The sequence is that of N-(5'-phosphoribosyl)anthranilate isomerase from Bradyrhizobium sp. (strain BTAi1 / ATCC BAA-1182).